Reading from the N-terminus, the 545-residue chain is Glucose-6-phosphate isomerase (545 aa).

Residue E343 is the Proton donor of the active site. Catalysis depends on residues H374 and K513.

It belongs to the GPI family.

It localises to the cytoplasm. It catalyses the reaction alpha-D-glucose 6-phosphate = beta-D-fructose 6-phosphate. The protein operates within carbohydrate biosynthesis; gluconeogenesis. It participates in carbohydrate degradation; glycolysis; D-glyceraldehyde 3-phosphate and glycerone phosphate from D-glucose: step 2/4. In terms of biological role, catalyzes the reversible isomerization of glucose-6-phosphate to fructose-6-phosphate. The chain is Glucose-6-phosphate isomerase from Methylibium petroleiphilum (strain ATCC BAA-1232 / LMG 22953 / PM1).